Here is a 96-residue protein sequence, read N- to C-terminus: Co-chaperonin GroES (96 aa).

Belongs to the GroES chaperonin family. Heptamer of 7 subunits arranged in a ring. Interacts with the chaperonin GroEL.

The protein localises to the cytoplasm. Its function is as follows. Together with the chaperonin GroEL, plays an essential role in assisting protein folding. The GroEL-GroES system forms a nano-cage that allows encapsulation of the non-native substrate proteins and provides a physical environment optimized to promote and accelerate protein folding. GroES binds to the apical surface of the GroEL ring, thereby capping the opening of the GroEL channel. The sequence is that of Co-chaperonin GroES from Shewanella oneidensis (strain ATCC 700550 / JCM 31522 / CIP 106686 / LMG 19005 / NCIMB 14063 / MR-1).